A 245-amino-acid polypeptide reads, in one-letter code: Isopentenyl phosphate kinase (245 aa).

Residue 5 to 9 (KIGGS) participates in ATP binding. Residue G45 participates in substrate binding. G46 contributes to the ATP binding site. 2 residues coordinate substrate: H50 and G143. ATP-binding positions include D164, 169-174 (YSKDPK), G201, and K205.

This sequence belongs to the isopentenyl phosphate kinase family. Homodimer.

The catalysed reaction is isopentenyl phosphate + ATP = isopentenyl diphosphate + ADP. Catalyzes the formation of isopentenyl diphosphate (IPP), the building block of all isoprenoids. Has lower activity with isopentenyl thiolophosphate (ISP). Has low activity with dimethylallyl phosphate (DMAP), 1-butyl phosphate (BP) and 3-buten-1-yl phosphate (BEP). Has no significant activity with geranyl phosphate (in vitro). The chain is Isopentenyl phosphate kinase from Thermoplasma acidophilum (strain ATCC 25905 / DSM 1728 / JCM 9062 / NBRC 15155 / AMRC-C165).